We begin with the raw amino-acid sequence, 368 residues long: 3-dehydroquinate synthase (368 aa).

Residues 110 to 114 (GVIGD), 134 to 135 (TS), lysine 147, and lysine 156 each bind NAD(+). Zn(2+) contacts are provided by glutamate 189, histidine 254, and histidine 271.

This sequence belongs to the sugar phosphate cyclases superfamily. Dehydroquinate synthase family. It depends on NAD(+) as a cofactor. Co(2+) serves as cofactor. The cofactor is Zn(2+).

It localises to the cytoplasm. It catalyses the reaction 7-phospho-2-dehydro-3-deoxy-D-arabino-heptonate = 3-dehydroquinate + phosphate. It functions in the pathway metabolic intermediate biosynthesis; chorismate biosynthesis; chorismate from D-erythrose 4-phosphate and phosphoenolpyruvate: step 2/7. Functionally, catalyzes the conversion of 3-deoxy-D-arabino-heptulosonate 7-phosphate (DAHP) to dehydroquinate (DHQ). This Thermosynechococcus vestitus (strain NIES-2133 / IAM M-273 / BP-1) protein is 3-dehydroquinate synthase.